A 67-amino-acid polypeptide reads, in one-letter code: MSLFPVIVIFGLSFPPIFFELLLSLAIFWLVRRALIPTGIYDFVWHPALFNTALYCCLFYLLSRLFV.

A run of 2 helical transmembrane segments spans residues 3-23 (LFPVIVIFGLSFPPIFFELLL) and 43-63 (FVWHPALFNTALYCCLFYLLS).

It belongs to the AaeX family.

The protein localises to the cell membrane. The protein is Protein AaeX of Cronobacter sakazakii (strain ATCC BAA-894) (Enterobacter sakazakii).